The sequence spans 251 residues: Pantothenate synthetase (251 aa).

28-35 (MGALHTGH) is a binding site for ATP. Residue histidine 35 is the Proton donor of the active site. Glutamine 59 serves as a coordination point for (R)-pantoate. Glutamine 59 provides a ligand contact to beta-alanine. 145-148 (GEKD) is a binding site for ATP. A (R)-pantoate-binding site is contributed by glutamine 151. ATP contacts are provided by residues valine 174 and 182–185 (KSSR).

The protein belongs to the pantothenate synthetase family. As to quaternary structure, homodimer.

The protein localises to the cytoplasm. It carries out the reaction (R)-pantoate + beta-alanine + ATP = (R)-pantothenate + AMP + diphosphate + H(+). It participates in cofactor biosynthesis; (R)-pantothenate biosynthesis; (R)-pantothenate from (R)-pantoate and beta-alanine: step 1/1. Its function is as follows. Catalyzes the condensation of pantoate with beta-alanine in an ATP-dependent reaction via a pantoyl-adenylate intermediate. In Bdellovibrio bacteriovorus (strain ATCC 15356 / DSM 50701 / NCIMB 9529 / HD100), this protein is Pantothenate synthetase.